The following is a 1416-amino-acid chain: K homology domain-containing protein 4 (1416 aa).

Disordered regions lie at residues 25-76, 108-174, 196-225, 255-320, and 341-385; these read NPNG…TSMR, KAEA…TRSS, VNSS…LSQS, QNDE…FPGR, and SSLN…MPKP. 3 stretches are compositionally biased toward low complexity: residues 196–213, 273–285, and 341–350; these read VNSS…SANH, QSSF…LDQL, and SSLNPPASGS. Positions 357-369 are enriched in polar residues; it reads GLSSAQPLRSPQP. KH domains follow at residues 412–504, 508–594, 747–816, 817–892, and 900–968; these read FKST…VILD, GLRS…QVSM, FEVR…EELP, AEMS…SVME, and DYIS…DHVP. 2 disordered regions span residues 1215–1240 and 1289–1416; these read AGVS…SGHR and HASG…FDRA. Polar residues predominate over residues 1219-1239; sequence VPTSGGIQFPSQPSLHQQSGH. The span at 1343 to 1374 shows a compositional bias: low complexity; that stretch reads QQQAQQQLQYQQQQQQQQQQQQQPGYGMPHQP. The segment covering 1391–1402 has biased composition (polar residues); the sequence is RNTQNPDSTTMD.

Functionally, RNA-binding protein that recognizes the sequence AUACCC via its tandem KH domains 3 and 4, probably in order to promote mRNA instability. Plays an essential role in filamentous growth and virulence. This Mycosarcoma maydis (Corn smut fungus) protein is K homology domain-containing protein 4.